The sequence spans 707 residues: Ribosomal RNA large subunit methyltransferase K/L (707 aa).

Residues 44 to 155 (VIYNLCLWSR…NDILTVSFDL (112 aa)) form the THUMP domain.

This sequence belongs to the methyltransferase superfamily. RlmKL family.

The protein localises to the cytoplasm. The enzyme catalyses guanosine(2445) in 23S rRNA + S-adenosyl-L-methionine = N(2)-methylguanosine(2445) in 23S rRNA + S-adenosyl-L-homocysteine + H(+). It carries out the reaction guanosine(2069) in 23S rRNA + S-adenosyl-L-methionine = N(2)-methylguanosine(2069) in 23S rRNA + S-adenosyl-L-homocysteine + H(+). Specifically methylates the guanine in position 2445 (m2G2445) and the guanine in position 2069 (m7G2069) of 23S rRNA. The protein is Ribosomal RNA large subunit methyltransferase K/L of Legionella pneumophila (strain Lens).